Consider the following 478-residue polypeptide: MTTFVDRVELHAAAGNGGHGCASVHREKFKPLGGPDGGNGGRGGDVILVVEQSVTTLLDYHHSPHRKATNGQPGAGDNRSGKDGQDLVLPVPDGTVVLDKAGNVLADLVGQGTTFVAGQGGRGGLGNAALASARRKAPGFALLGEPGESRDIVLELKTVADVALVGYPSAGKSSLISVLSAAKPKIADYPFTTLVPNLGVVTAGSTVYTIADVPGLIPGASQGKGLGLEFLRHVERCSVLVHVLDTATLESDRDPVSDLDMIEEELRLYGGLENRPRIVALNKVDIPDGQDLADMIRPDLEARGYRVFEVSAIAHKGLKELSFALAGIIAEARATKPKEEATRIVIRPRAVDDAGFTVTLEDDGIYRVRGEKPERWVRQTDFNNDEAVGYLADRLNRLGVEDSLMKAGARAGDGVAIGPEENAVVFDWEPTVTAGAEMLGRRGEDHRLEEPRPAAQRRRERDAERDDAEKEYDEFDPF.

Residues 2-159 (TTFVDRVELH…RDIVLELKTV (158 aa)) enclose the Obg domain. Residues 61–87 (HHSPHRKATNGQPGAGDNRSGKDGQDL) form a disordered region. An OBG-type G domain is found at 160–330 (ADVALVGYPS…LSFALAGIIA (171 aa)). GTP-binding positions include 166–173 (GYPSAGKS), 191–195 (FTTLV), 212–215 (DVPG), 282–285 (NKVD), and 311–313 (SAI). The Mg(2+) site is built by Ser173 and Thr193. The region spanning 348 to 430 (PRAVDDAGFT…ENAVVFDWEP (83 aa)) is the OCT domain. A disordered region spans residues 436-478 (AEMLGRRGEDHRLEEPRPAAQRRRERDAERDDAEKEYDEFDPF). A compositionally biased stretch (basic and acidic residues) spans 439–468 (LGRRGEDHRLEEPRPAAQRRRERDAERDDA). A compositionally biased stretch (acidic residues) spans 469 to 478 (EKEYDEFDPF).

It belongs to the TRAFAC class OBG-HflX-like GTPase superfamily. OBG GTPase family. As to quaternary structure, monomer. Mg(2+) is required as a cofactor.

The protein localises to the cytoplasm. Its function is as follows. An essential GTPase which binds GTP, GDP and possibly (p)ppGpp with moderate affinity, with high nucleotide exchange rates and a fairly low GTP hydrolysis rate. Plays a role in control of the cell cycle, stress response, ribosome biogenesis and in those bacteria that undergo differentiation, in morphogenesis control. The chain is GTPase Obg from Streptomyces griseus subsp. griseus (strain JCM 4626 / CBS 651.72 / NBRC 13350 / KCC S-0626 / ISP 5235).